The following is a 489-amino-acid chain: Rhamnulokinase (489 aa).

13-17 (ASSGR) is a binding site for ATP. A disulfide bond links cysteine 68 and cysteine 222. Residues glycine 83 and 236 to 238 (HDT) each bind substrate. Aspartate 237 serves as the catalytic Proton acceptor. Position 259 (threonine 259) interacts with ATP. Asparagine 296 is a substrate binding site. Glutamine 304 provides a ligand contact to ATP. An intrachain disulfide couples cysteine 353 to cysteine 370. An ATP-binding site is contributed by glycine 402. Residues cysteine 413 and cysteine 417 are joined by a disulfide bond.

The protein belongs to the rhamnulokinase family. In terms of assembly, monomer. Requires Mg(2+) as cofactor.

The enzyme catalyses L-rhamnulose + ATP = L-rhamnulose 1-phosphate + ADP + H(+). The protein operates within carbohydrate degradation; L-rhamnose degradation; glycerone phosphate from L-rhamnose: step 2/3. In terms of biological role, involved in the catabolism of L-rhamnose (6-deoxy-L-mannose). Catalyzes the transfer of the gamma-phosphate group from ATP to the 1-hydroxyl group of L-rhamnulose to yield L-rhamnulose 1-phosphate. This Escherichia coli O139:H28 (strain E24377A / ETEC) protein is Rhamnulokinase.